A 63-amino-acid chain; its full sequence is Large ribosomal subunit protein bL35 (63 aa).

Belongs to the bacterial ribosomal protein bL35 family.

The sequence is that of Large ribosomal subunit protein bL35 from Campylobacter jejuni (strain RM1221).